The chain runs to 418 residues: Pestheic acid cluster transcriptional regulator 1 (418 aa).

Positions 244-272 (GTAVTTTATTSSSFISKSSEEPSPKRIKP) are disordered. Residues 245–260 (TAVTTTATTSSSFISK) show a composition bias toward low complexity.

Its subcellular location is the nucleus. Its function is as follows. Transcription factor that, with ptaR2 and ptaR3, coregulates the expression of the gene cluster that mediates the biosynthesis of pestheic acid, a diphenyl ether which is a biosynthetic precursor of the unique chloropupukeananes. The protein is Pestheic acid cluster transcriptional regulator 1 of Pestalotiopsis fici (strain W106-1 / CGMCC3.15140).